The chain runs to 161 residues: Cyclic pyranopterin monophosphate synthase (161 aa).

Substrate is bound by residues 75 to 77 and 113 to 114; these read LCH and ME. Asp128 is an active-site residue.

The protein belongs to the MoaC family. Homohexamer; trimer of dimers.

The catalysed reaction is (8S)-3',8-cyclo-7,8-dihydroguanosine 5'-triphosphate = cyclic pyranopterin phosphate + diphosphate. It functions in the pathway cofactor biosynthesis; molybdopterin biosynthesis. In terms of biological role, catalyzes the conversion of (8S)-3',8-cyclo-7,8-dihydroguanosine 5'-triphosphate to cyclic pyranopterin monophosphate (cPMP). The chain is Cyclic pyranopterin monophosphate synthase from Enterobacter sp. (strain 638).